The primary structure comprises 180 residues: ATP synthase subunit delta, chloroplastic (180 aa).

The protein belongs to the ATPase delta chain family. F-type ATPases have 2 components, F(1) - the catalytic core - and F(0) - the membrane proton channel. F(1) has five subunits: alpha(3), beta(3), gamma(1), delta(1), epsilon(1). CF(0) has four main subunits: a(1), b(1), b'(1) and c(10-14). The alpha and beta chains form an alternating ring which encloses part of the gamma chain. F(1) is attached to F(0) by a central stalk formed by the gamma and epsilon chains, while a peripheral stalk is formed by the delta, b and b' chains.

It localises to the plastid. The protein localises to the chloroplast thylakoid membrane. In terms of biological role, f(1)F(0) ATP synthase produces ATP from ADP in the presence of a proton or sodium gradient. F-type ATPases consist of two structural domains, F(1) containing the extramembraneous catalytic core and F(0) containing the membrane proton channel, linked together by a central stalk and a peripheral stalk. During catalysis, ATP synthesis in the catalytic domain of F(1) is coupled via a rotary mechanism of the central stalk subunits to proton translocation. This protein is part of the stalk that links CF(0) to CF(1). It either transmits conformational changes from CF(0) to CF(1) or is implicated in proton conduction. This is ATP synthase subunit delta, chloroplastic from Rhodomonas salina (Cryptomonas salina).